The primary structure comprises 99 residues: MDTHEFHKLLIKVVDLFLEDRIKEFELKLNTTLDELEFEELIGKPDSSNSAENNGIFIDEYSYDASENAIKKLFVEYVRQPEFKYTVLSIKGVNDWVRE.

This is an uncharacterized protein from Acidianus hospitalis (AFV-1).